The sequence spans 187 residues: High-affinity copper transporter ctrA2 (187 aa).

2 helical membrane passes run 44–64 and 137–157; these read YAGT…LVAF and AAIF…VMTM.

Belongs to the copper transporter (Ctr) (TC 1.A.56) family. SLC31A subfamily.

Its subcellular location is the cell membrane. The enzyme catalyses Cu(2+)(in) = Cu(2+)(out). Functionally, high-affinity copper transporter of plasma membrane that mediates copper uptake under low copper conditions. The mechanism driving the transmembrane transport of copper has still to be determined. Acts as a potential virulence factor. This is High-affinity copper transporter ctrA2 from Aspergillus fumigatus (strain ATCC MYA-4609 / CBS 101355 / FGSC A1100 / Af293) (Neosartorya fumigata).